The following is a 323-amino-acid chain: Fructose-1,6-bisphosphatase class 1 (323 aa).

4 residues coordinate Mg(2+): glutamate 90, aspartate 111, leucine 113, and aspartate 114. Residues 114 to 117, tyrosine 222, and lysine 253 each bind substrate; that span reads DGSS. Glutamate 259 provides a ligand contact to Mg(2+).

Belongs to the FBPase class 1 family. In terms of assembly, homotetramer. It depends on Mg(2+) as a cofactor.

The protein localises to the cytoplasm. The catalysed reaction is beta-D-fructose 1,6-bisphosphate + H2O = beta-D-fructose 6-phosphate + phosphate. It participates in carbohydrate biosynthesis; gluconeogenesis. This chain is Fructose-1,6-bisphosphatase class 1, found in Pelobacter propionicus (strain DSM 2379 / NBRC 103807 / OttBd1).